We begin with the raw amino-acid sequence, 338 residues long: D-erythrose-4-phosphate dehydrogenase (338 aa).

NAD(+) is bound at residue 12 to 13 (RI). Residues 154–156 (SCT), arginine 200, 213–214 (TK), and arginine 236 each bind substrate. Cysteine 155 functions as the Nucleophile in the catalytic mechanism. Asparagine 318 contacts NAD(+).

The protein belongs to the glyceraldehyde-3-phosphate dehydrogenase family. Epd subfamily. Homotetramer.

The protein localises to the cytoplasm. The catalysed reaction is D-erythrose 4-phosphate + NAD(+) + H2O = 4-phospho-D-erythronate + NADH + 2 H(+). Its pathway is cofactor biosynthesis; pyridoxine 5'-phosphate biosynthesis; pyridoxine 5'-phosphate from D-erythrose 4-phosphate: step 1/5. In terms of biological role, catalyzes the NAD-dependent conversion of D-erythrose 4-phosphate to 4-phosphoerythronate. This is D-erythrose-4-phosphate dehydrogenase from Yersinia pestis bv. Antiqua (strain Antiqua).